The sequence spans 347 residues: tRNA pseudouridine synthase D (347 aa).

Asp78 functions as the Nucleophile in the catalytic mechanism. The region spanning 150–304 is the TRUD domain; the sequence is GLPNFFGPQR…AEGTRRAARL (155 aa).

It belongs to the pseudouridine synthase TruD family.

It catalyses the reaction uridine(13) in tRNA = pseudouridine(13) in tRNA. In terms of biological role, responsible for synthesis of pseudouridine from uracil-13 in transfer RNAs. The sequence is that of tRNA pseudouridine synthase D from Anaeromyxobacter dehalogenans (strain 2CP-C).